Here is a 623-residue protein sequence, read N- to C-terminus: MEDLSDVFDIYAICACCKVAPTSEGTKNEPFSPRTFRGLGNKGTLPWKCNSVDMKYFSSVTTYVDESKYEKLKWKRERYLRMEASQGGGDNTSGGDNTHGGDNADKLQNVVVMGRSSWESIPKQYKPLPNRINVVLSKTLTKEDVKEKVFIIDSIDDLLLLLKKLKYYKCFIIGGAQVYRECLSRNLIKQIYFTRINGAYPCDVFFPEFDESQFRVTSVSEVYNSKGTTLDFLVYSKVGGGVDGGASNGSTATALRRTAMRSTAMRRNVAPRTAAPPMGPHSRANGERAPPRARARRTTPRQRKTTSCTSALTTKWGRKTRSTCKILKFTTASRLMQHPEYQYLGIIYDIIMNGNKQGDRTGVGVMSNFGYMMKFNLSEYFPLLTTKKLFLRGIIEELLWFIRGETNGNTLLNKNVRIWEANGTREFLDNRKLFHREVNDLGPIYGFQWRHFGAEYTNMHDNYEDKGVDQLKNVIHLIKNEPTSRRIILCAWNVKDLDQMALPPCHILCQFYVFDGKLSCIMYQRSCDLGLGVPFNIASYSIFTHMIAQVCNLQPAQFIHILGNAHVYNNHVDSLKVQLNRIPYPFPTLKLNPEVKNIEDFTISDFTIENYVHHDKITMEMAA.

Positions 9–237 (DIYAICACCK…TTLDFLVYSK (229 aa)) constitute a DHFR domain. Residue 13 to 14 (IC) coordinates substrate. NADP(+) is bound by residues alanine 15 and 38–44 (GLGNKGT). Aspartate 53 contacts substrate. 3 repeat units span residues 88–91 (GGDN), 94–97 (GGDN), and 100–103 (GGDN). A 3 X 4 AA repeats of G-G-D-N region spans residues 88 to 103 (GGDNTSGGDNTHGGDN). Residues 115 to 117 (RSS), 137 to 139 (SKT), and aspartate 153 contribute to the NADP(+) site. Residues isoleucine 173, tyrosine 179, and threonine 194 each contribute to the substrate site. 174 to 181 (GGAQVYRE) lines the NADP(+) pocket. Residues 263-309 (TAMRRNVAPRTAAPPMGPHSRANGERAPPRARARRTTPRQRKTTSCT) are disordered. The segment covering 291–304 (PRARARRTTPRQRK) has biased composition (basic residues). Positions 337–623 (QHPEYQYLGI…HDKITMEMAA (287 aa)) are thymidylate synthase. DUMP is bound at residue arginine 360. Cysteine 505 is an active-site residue. Residues histidine 506, 524–528 (QRSCD), asparagine 536, and 566–568 (HVY) each bind dUMP.

This sequence in the N-terminal section; belongs to the dihydrofolate reductase family. In the C-terminal section; belongs to the thymidylate synthase family. Homodimer.

It catalyses the reaction (6S)-5,6,7,8-tetrahydrofolate + NADP(+) = 7,8-dihydrofolate + NADPH + H(+). The catalysed reaction is dUMP + (6R)-5,10-methylene-5,6,7,8-tetrahydrofolate = 7,8-dihydrofolate + dTMP. It participates in cofactor biosynthesis; tetrahydrofolate biosynthesis; 5,6,7,8-tetrahydrofolate from 7,8-dihydrofolate: step 1/1. In terms of biological role, bifunctional enzyme. Involved in de novo dTMP biosynthesis. Key enzyme in folate metabolism. Catalyzes an essential reaction for de novo glycine and purine synthesis, DNA precursor synthesis, and for the conversion of dUMP to dTMP. The protein is Bifunctional dihydrofolate reductase-thymidylate synthase of Plasmodium vivax.